Here is a 100-residue protein sequence, read N- to C-terminus: NADH-quinone oxidoreductase subunit K 2 (100 aa).

Transmembrane regions (helical) follow at residues 4 to 24 (LWWS…GVLL), 28 to 48 (ILIV…NFIA), and 60 to 80 (IFAI…LGIL).

This sequence belongs to the complex I subunit 4L family. In terms of assembly, NDH-1 is composed of 14 different subunits. Subunits NuoA, H, J, K, L, M, N constitute the membrane sector of the complex.

The protein resides in the cell inner membrane. It carries out the reaction a quinone + NADH + 5 H(+)(in) = a quinol + NAD(+) + 4 H(+)(out). Its function is as follows. NDH-1 shuttles electrons from NADH, via FMN and iron-sulfur (Fe-S) centers, to quinones in the respiratory chain. The immediate electron acceptor for the enzyme in this species is believed to be ubiquinone. Couples the redox reaction to proton translocation (for every two electrons transferred, four hydrogen ions are translocated across the cytoplasmic membrane), and thus conserves the redox energy in a proton gradient. The polypeptide is NADH-quinone oxidoreductase subunit K 2 (Rhizobium meliloti (strain 1021) (Ensifer meliloti)).